The sequence spans 313 residues: Homoserine kinase (313 aa).

92–102 (PPGRGLGSSGA) is an ATP binding site.

This sequence belongs to the GHMP kinase family. Homoserine kinase subfamily.

It is found in the cytoplasm. The catalysed reaction is L-homoserine + ATP = O-phospho-L-homoserine + ADP + H(+). The protein operates within amino-acid biosynthesis; L-threonine biosynthesis; L-threonine from L-aspartate: step 4/5. Functionally, catalyzes the ATP-dependent phosphorylation of L-homoserine to L-homoserine phosphate. The chain is Homoserine kinase from Aeropyrum pernix (strain ATCC 700893 / DSM 11879 / JCM 9820 / NBRC 100138 / K1).